Consider the following 307-residue polypeptide: D-alanine--D-alanine ligase (307 aa).

Positions 105–304 (KMLWKGFGLP…FEKLVEKILE (200 aa)) constitute an ATP-grasp domain. 135–190 (VARLGLPLMVKPSREGSSVGLTKVDSADKLKSAVDLALKFDDIVLIEEWLSGDELT) contributes to the ATP binding site. 3 residues coordinate Mg(2+): Asp258, Glu271, and Asn273.

It belongs to the D-alanine--D-alanine ligase family. Mg(2+) is required as a cofactor. Mn(2+) serves as cofactor.

The protein resides in the cytoplasm. It carries out the reaction 2 D-alanine + ATP = D-alanyl-D-alanine + ADP + phosphate + H(+). It functions in the pathway cell wall biogenesis; peptidoglycan biosynthesis. In terms of biological role, cell wall formation. The chain is D-alanine--D-alanine ligase from Actinobacillus succinogenes (strain ATCC 55618 / DSM 22257 / CCUG 43843 / 130Z).